The chain runs to 1154 residues: MSVRFIIGRSGSGKTTMCLKEMIDQLAQKPDGDPIIYLVPEQMTFQSEYALMNGSLKGMIRAQVFSFTRLAWRILQETGGMSRHHLTQTGVHMLLRKIVEQQKEQLTLFRKAADKRGFIEQLEQMLTEYKRYCVTPATLKQTEEQLRRHATANETVLADKLKDTAMIFEQFEQQMAHHYVDSEDYLRLLAEKIRHSSYMKRARIYMDGFYEFTPQEYMVIEQLFIHCPHVTVALTLDAPYEQLPDDLHVFRNTWRTYAQLRDIALQNGVPIEKVEQLRHNVRHKHEELRHLEAHYDDRPVCKWEKQTEAIIIGEATTRRAEIEGIAREIIRLVRDEGYRYRDIALLIRNVGDYRNVLKTVFADYRIPYFIDEKEPMLDHPFIEWLRASMEAVRTNFRYEAVFRAVKTDFFFHLDQPVHDMRMAMDQLENYVLAFGIQGDKWTEHWTYRKYKGLEGVHAPQTDEEKRYEQQLNEWRKLVISPLLVLQKRLKQAKTGREQCEALYAYAEHLQIPQKLERLRDEAEERGDLSVARHHEQVWQAFIDLLDQYVEILGDETLSLETFLTIIETGFESLQFSLVPPATDQVLIAHFDRSRLSNIRCTFLVGVNEGVIPMRKNDDGMLSETDRELLYHYSLHVAPASRERMLDEPFLLYLALVSSSERLYVTYALSNEQEKTLLPSMFIKRLTDMFPNVTKMQWGTDPFLLPLQQQLAYVTNDVATLGPLVQQLEAWKRQYAIEPMWWDVYNAYVQHEQWKERIAVVVRALFYENRAKRLNKQLAKELYGKKVKASISRMETFNRCPFAHFAAHGLKLKERTVFQLKAPDMGQLFHQALKVIADRLRQEQLPWSQLSKQQCEQLSYEAVEQIAPYIQQEVLLSTHRYRYMKKKLQTIMTKATTVLSEHAKRSGFVPIGVELGFGDGEPLPPLTFTLSDGTVLQFVGRIDRVDQAMSEQGVLLRVIDYKSKQKTLDLTEVYYGLALQMLAYLDIVLEYAEKLVGTSAFPAGVLYFPIHNPMMKVNEWLDEHELEKKFLEQFKMGGYVLADEKTVRLMDEHVEPGTSSLIIPVRLNKNGTFAQHSKVLTEQQFTMLRQHVRRFIVDVGEQMIEGVTHIAPYKQKNKTACQYCEFRDVCQFDEGVDAEQYRVLTPKNIDEWLKG.

The 284-residue stretch at 1-284 (MSVRFIIGRS…EQLRHNVRHK (284 aa)) folds into the UvrD-like helicase ATP-binding domain. 8-15 (GRSGSGKT) contacts ATP. Residues 279 to 583 (HNVRHKHEEL…QFSLVPPATD (305 aa)) form the UvrD-like helicase C-terminal domain. [4Fe-4S] cluster contacts are provided by Cys799, Cys1120, Cys1123, and Cys1129.

This sequence belongs to the helicase family. AddB/RexB type 1 subfamily. As to quaternary structure, heterodimer of AddA and AddB. Requires Mg(2+) as cofactor. [4Fe-4S] cluster serves as cofactor.

In terms of biological role, the heterodimer acts as both an ATP-dependent DNA helicase and an ATP-dependent, dual-direction single-stranded exonuclease. Recognizes the chi site generating a DNA molecule suitable for the initiation of homologous recombination. The AddB subunit has 5' -&gt; 3' nuclease activity but not helicase activity. The protein is ATP-dependent helicase/deoxyribonuclease subunit B of Anoxybacillus flavithermus (strain DSM 21510 / WK1).